Here is a 165-residue protein sequence, read N- to C-terminus: Putative universal stress protein SH1215 (165 aa).

Belongs to the universal stress protein A family.

The protein resides in the cytoplasm. This chain is Putative universal stress protein SH1215, found in Staphylococcus haemolyticus (strain JCSC1435).